Here is a 407-residue protein sequence, read N- to C-terminus: BRCA1-A complex subunit Abraxas 1 (407 aa).

Residues 7–155 (LGVLSGFVLG…THCLEHALYK (149 aa)) enclose the MPN domain. Phosphoserine is present on serine 48. The stretch at 209–259 (LKEVHKINEMYAAVQEELKSICQKVEQSEREVEKLLMDVNQLKEVRRTQQA) forms a coiled coil. The interval 344–407 (KRKALDTHDQ…DADYPRSPTF (64 aa)) is disordered. Residues 347–366 (ALDTHDQGSVKRPRLLETES) are compositionally biased toward basic and acidic residues. Residues serine 384, serine 385, serine 394, and serine 404 each carry the phosphoserine modification. Residues 388-399 (IDIEMGSPEDDA) show a composition bias toward acidic residues. The short motif at 404–407 (SPTF) is the pSXXF motif element.

This sequence belongs to the FAM175 family. Abraxas subfamily. Component of the ARISC complex, at least composed of UIMC1/RAP80, ABRAXAS1, BRCC3/BRCC36, BABAM2 and BABAM1/NBA1. Component of the BRCA1-A complex, at least composed of the BRCA1, BARD1, UIMC1/RAP80, ABRAXAS1, BRCC3/BRCC36, BABAM2 and BABAM1/NBA1. In the complex, interacts directly with UIMC1/RAP80, BRCC3/BRCC36 and BABAM2. Homodimer. Interacts directly (when phosphorylated at Ser-404) with BRCA1. The phosphorylated homodimer can interact directly with two BRCA1 chains, giving rise to a heterotetramer. Binds polyubiquitin. Post-translationally, phosphorylation of Ser-404 of the pSXXF motif by ATM or ATR constitutes a specific recognition motif for the BRCT domain of BRCA1.

Its subcellular location is the nucleus. In terms of biological role, involved in DNA damage response and double-strand break (DSB) repair. Component of the BRCA1-A complex, acting as a central scaffold protein that assembles the various components of the complex and mediates the recruitment of BRCA1. The BRCA1-A complex specifically recognizes 'Lys-63'-linked ubiquitinated histones H2A and H2AX at DNA lesion sites, leading to target the BRCA1-BARD1 heterodimer to sites of DNA damage at DSBs. This complex also possesses deubiquitinase activity that specifically removes 'Lys-63'-linked ubiquitin on histones H2A and H2AX. In Mus musculus (Mouse), this protein is BRCA1-A complex subunit Abraxas 1.